Reading from the N-terminus, the 136-residue chain is Large ribosomal subunit protein uL16c (136 aa).

This sequence belongs to the universal ribosomal protein uL16 family. As to quaternary structure, part of the 50S ribosomal subunit.

It is found in the plastid. The protein resides in the chloroplast. In Oryza sativa (Rice), this protein is Large ribosomal subunit protein uL16c.